Consider the following 137-residue polypeptide: MVHLTTLLCKAYRGGHLTIRLALGGCTNRPFYRIVAAHNKCPRDGRFVEQLGSYDPLPNSHGEKLVALNLDRIRHWIGCGAHLSKPMEKLLGLAGFFPLHPMMITNAERLRRKLAREVLLASQKTDAEATDAEATET.

The transit peptide at 1 to 34 directs the protein to the mitochondrion; sequence MVHLTTLLCKAYRGGHLTIRLALGGCTNRPFYRI. Thr-130 is modified (phosphothreonine).

It belongs to the bacterial ribosomal protein bS16 family. Component of the mitochondrial ribosome small subunit (28S) which comprises a 12S rRNA and about 30 distinct proteins.

It localises to the mitochondrion. The sequence is that of Small ribosomal subunit protein bS16m (MRPS16) from Pongo abelii (Sumatran orangutan).